The following is a 272-amino-acid chain: Undecaprenyl-diphosphatase (272 aa).

The next 8 membrane-spanning stretches (helical) occupy residues 1 to 21 (MSYL…FLPI), 38 to 58 (PGAT…VVFF), 84 to 104 (VRMG…GYLF), 112 to 132 (FRSL…LGLA), 145 to 165 (MTYG…VPGV), 183 to 203 (PVAA…SGLY), 219 to 239 (QTAV…AGLM), and 250 to 270 (FVVY…TGAI).

Belongs to the UppP family.

The protein localises to the cell membrane. It carries out the reaction di-trans,octa-cis-undecaprenyl diphosphate + H2O = di-trans,octa-cis-undecaprenyl phosphate + phosphate + H(+). Catalyzes the dephosphorylation of undecaprenyl diphosphate (UPP). Confers resistance to bacitracin. The chain is Undecaprenyl-diphosphatase from Clavibacter michiganensis subsp. michiganensis (strain NCPPB 382).